Reading from the N-terminus, the 452-residue chain is Probable ECA polymerase (452 aa).

11 consecutive transmembrane segments (helical) span residues 6–26 (FSGLLVVWLLSTLFIATLTWF), 37–57 (VFFSLLFLLTFFFGFPLTSVL), 63–83 (VGVAPPEILLQALLSAACFYG), 118–138 (VILMGIALVSVAIFFMHNGFL), 155–175 (GVALKRFFYFFIPAMLVVYFL), 181–201 (AWLFFLVSTVAFGLLTYMIVG), 207–227 (IIIAFAIFLFIGIIRGWISLW), 228–248 (MLAAAGVLGIVGMFWLALKRY), 341–361 (LVVMGGALFIPLGAIVVGLII), 378–398 (YKAAILHSFCFGAIFNMIVLV), and 410–430 (VFFLVVFGASLLVAKLLFWLF).

The protein belongs to the WzyE family. In terms of assembly, probably part of a complex composed of WzxE, WzyE and WzzE.

The protein localises to the cell inner membrane. It participates in bacterial outer membrane biogenesis; enterobacterial common antigen biosynthesis. Its function is as follows. Probably involved in the polymerization of enterobacterial common antigen (ECA) trisaccharide repeat units. The polypeptide is Probable ECA polymerase (Salmonella gallinarum (strain 287/91 / NCTC 13346)).